The primary structure comprises 377 residues: Alanine racemase (377 aa).

Residue K37 is the Proton acceptor; specific for D-alanine of the active site. At K37 the chain carries N6-(pyridoxal phosphate)lysine. R135 contributes to the substrate binding site. Y271 serves as the catalytic Proton acceptor; specific for L-alanine. Substrate is bound at residue M319.

Belongs to the alanine racemase family. The cofactor is pyridoxal 5'-phosphate.

It catalyses the reaction L-alanine = D-alanine. It functions in the pathway amino-acid biosynthesis; D-alanine biosynthesis; D-alanine from L-alanine: step 1/1. Catalyzes the interconversion of L-alanine and D-alanine. May also act on other amino acids. The sequence is that of Alanine racemase (alr) from Helicobacter pylori (strain P12).